A 308-amino-acid polypeptide reads, in one-letter code: Adult enhancer factor 1 (308 aa).

Disordered stretches follow at residues 50–94 (AHMA…PLPF) and 123–143 (QAAAAEQQQPPPPTSHLTHLT). The segment covering 56 to 76 (QQQQQQQQQQQQQHHQQQQQQ) has biased composition (low complexity). Over residues 81 to 90 (PSVPPPPTEL) the composition is skewed to pro residues. 4 C2H2-type zinc fingers span residues 184–206 (FHCTVCDRRFRQLSTLTNHVKIH), 212–234 (YKCNVCDKTFRQSSTLTNHLKIH), 240–262 (YNCNFCPKHFRQLSTLANHVKIH), and 268–290 (FECVICKKQFRQSSTLNNHIKIH).

In terms of tissue distribution, found in all tissues examined including the ovary and the fat body.

It localises to the nucleus. Functionally, transcriptional repressor that binds specifically to fat body-specific enhancers, namely the adult ADH enhancer (AAE) and the enhancer that controls yolk protein gene expression. In Drosophila melanogaster (Fruit fly), this protein is Adult enhancer factor 1 (Aef1).